The primary structure comprises 348 residues: DNA-directed RNA polymerase subunit alpha (348 aa).

Residues Met1–Asp243 are alpha N-terminal domain (alpha-NTD). The interval Val260–Ala348 is alpha C-terminal domain (alpha-CTD).

This sequence belongs to the RNA polymerase alpha chain family. As to quaternary structure, homodimer. The RNAP catalytic core consists of 2 alpha, 1 beta, 1 beta' and 1 omega subunit. When a sigma factor is associated with the core the holoenzyme is formed, which can initiate transcription.

The catalysed reaction is RNA(n) + a ribonucleoside 5'-triphosphate = RNA(n+1) + diphosphate. Its function is as follows. DNA-dependent RNA polymerase catalyzes the transcription of DNA into RNA using the four ribonucleoside triphosphates as substrates. The sequence is that of DNA-directed RNA polymerase subunit alpha from Oleidesulfovibrio alaskensis (strain ATCC BAA-1058 / DSM 17464 / G20) (Desulfovibrio alaskensis).